We begin with the raw amino-acid sequence, 508 residues long: Tryptamine 4-monooxygenase (508 aa).

A signal peptide spans 1 to 19; the sequence is MIAVLFSFVIAGCIYYIVS. Cys-439 is a binding site for heme.

The protein belongs to the cytochrome P450 family. It depends on heme as a cofactor.

The catalysed reaction is tryptamine + AH2 + O2 = 4-hydroxytryptamine + A + H2O. Its pathway is secondary metabolite biosynthesis. Functionally, cytochrome P450 monooxygenase; part of the gene cluster that mediates the biosynthesis of psilocybin, a psychotropic tryptamine-derived natural product. The first step in the pathway is the decarboxylation of L-tryptophan to tryptamine by the decarboxylase psiD. 4-hydroxy-L-tryptophan is accepted as substrate by psiD as well. The cytochrome P450 monooxygenase psiH then converts tryptamine to 4-hydroxytryptamine. The kinase psiK catalyzes the 4-O-phosphorylation step by converting 4-hydroxytryptamine into norbaeocystin. The methyltransferase psiM then catalyzes iterative methyl transfer to the amino group of norbaeocystin to yield psilocybin via a monomethylated intermediate, baeocystin. The protein is Tryptamine 4-monooxygenase of Psilocybe cubensis (Psychedelic mushroom).